Here is a 389-residue protein sequence, read N- to C-terminus: Probable family 17 glucosidase SCW10 (389 aa).

A signal peptide spans 1 to 18 (MRFSNFLTVSALLTGALG). The propeptide occupies 19 to 29 (APAVRHKHEKR). A disordered region spans residues 70 to 134 (ASQATTSTLE…SSASSSISAS (65 aa)). Asn-279 is a glycosylation site (N-linked (GlcNAc...) asparagine). Catalysis depends on Glu-326, which acts as the Nucleophile.

The protein belongs to the glycosyl hydrolase 17 family. Glycosylated.

The protein resides in the secreted. Its subcellular location is the cell wall. Glucanases possibly play a role in cell expansion during growth, in cell-cell fusion during mating, and in spore release during sporulation. In Saccharomyces cerevisiae (strain ATCC 204508 / S288c) (Baker's yeast), this protein is Probable family 17 glucosidase SCW10 (SCW10).